The chain runs to 306 residues: Ornithine carbamoyltransferase (306 aa).

Residues Ser-46–Thr-49, Gln-73, Arg-97, and His-124–Gln-127 contribute to the carbamoyl phosphate site. L-ornithine contacts are provided by residues Asn-156, Asp-220, and Ser-224–Met-225. Carbamoyl phosphate-binding positions include Cys-260–Leu-261 and Arg-288.

Belongs to the aspartate/ornithine carbamoyltransferase superfamily. OTCase family.

The protein resides in the cytoplasm. It carries out the reaction carbamoyl phosphate + L-ornithine = L-citrulline + phosphate + H(+). Its pathway is amino-acid degradation; L-arginine degradation via ADI pathway; carbamoyl phosphate from L-arginine: step 2/2. In terms of biological role, reversibly catalyzes the transfer of the carbamoyl group from carbamoyl phosphate (CP) to the N(epsilon) atom of ornithine (ORN) to produce L-citrulline. The protein is Ornithine carbamoyltransferase of Campylobacter jejuni subsp. doylei (strain ATCC BAA-1458 / RM4099 / 269.97).